Consider the following 231-residue polypeptide: 5'-methylthioadenosine/S-adenosylhomocysteine nucleosidase (231 aa).

Glu-12 functions as the Proton acceptor in the catalytic mechanism. Substrate contacts are provided by residues Gly-78, Met-153, and 174–175 (ME). The active-site Proton donor is Asp-198.

This sequence belongs to the PNP/UDP phosphorylase family. MtnN subfamily.

The enzyme catalyses S-adenosyl-L-homocysteine + H2O = S-(5-deoxy-D-ribos-5-yl)-L-homocysteine + adenine. It catalyses the reaction S-methyl-5'-thioadenosine + H2O = 5-(methylsulfanyl)-D-ribose + adenine. The catalysed reaction is 5'-deoxyadenosine + H2O = 5-deoxy-D-ribose + adenine. It functions in the pathway amino-acid biosynthesis; L-methionine biosynthesis via salvage pathway; S-methyl-5-thio-alpha-D-ribose 1-phosphate from S-methyl-5'-thioadenosine (hydrolase route): step 1/2. Catalyzes the irreversible cleavage of the glycosidic bond in both 5'-methylthioadenosine (MTA) and S-adenosylhomocysteine (SAH/AdoHcy) to adenine and the corresponding thioribose, 5'-methylthioribose and S-ribosylhomocysteine, respectively. Also cleaves 5'-deoxyadenosine, a toxic by-product of radical S-adenosylmethionine (SAM) enzymes, into 5-deoxyribose and adenine. The polypeptide is 5'-methylthioadenosine/S-adenosylhomocysteine nucleosidase (Bacillus anthracis (strain A0248)).